A 171-amino-acid chain; its full sequence is Adenine phosphoribosyltransferase (171 aa).

Belongs to the purine/pyrimidine phosphoribosyltransferase family. Homodimer.

The protein localises to the cytoplasm. It carries out the reaction AMP + diphosphate = 5-phospho-alpha-D-ribose 1-diphosphate + adenine. It functions in the pathway purine metabolism; AMP biosynthesis via salvage pathway; AMP from adenine: step 1/1. Catalyzes a salvage reaction resulting in the formation of AMP, that is energically less costly than de novo synthesis. The polypeptide is Adenine phosphoribosyltransferase (Christiangramia forsetii (strain DSM 17595 / CGMCC 1.15422 / KT0803) (Gramella forsetii)).